The following is a 364-amino-acid chain: 1-aminocyclopropane-1-carboxylate oxidase homolog 11 (364 aa).

Residues 213 to 312 (KSLLMICHYY…RISVASFFSS (100 aa)) form the Fe2OG dioxygenase domain. Fe cation contacts are provided by H237, D239, and H293. A 2-oxoglutarate-binding site is contributed by R303.

Belongs to the iron/ascorbate-dependent oxidoreductase family. The cofactor is Fe(2+).

The chain is 1-aminocyclopropane-1-carboxylate oxidase homolog 11 from Arabidopsis thaliana (Mouse-ear cress).